The chain runs to 218 residues: Ribosomal RNA small subunit methyltransferase G (218 aa).

S-adenosyl-L-methionine is bound by residues Gly-82, Leu-87, 133 to 134 (VE), and Arg-147.

This sequence belongs to the methyltransferase superfamily. RNA methyltransferase RsmG family.

It localises to the cytoplasm. The catalysed reaction is guanosine(527) in 16S rRNA + S-adenosyl-L-methionine = N(7)-methylguanosine(527) in 16S rRNA + S-adenosyl-L-homocysteine. Functionally, specifically methylates the N7 position of guanine in position 527 of 16S rRNA. The chain is Ribosomal RNA small subunit methyltransferase G from Leptothrix cholodnii (strain ATCC 51168 / LMG 8142 / SP-6) (Leptothrix discophora (strain SP-6)).